We begin with the raw amino-acid sequence, 657 residues long: tRNA uridine 5-carboxymethylaminomethyl modification enzyme MnmG (657 aa).

13 to 18 serves as a coordination point for FAD; the sequence is GGGHAG. 281-295 is an NAD(+) binding site; it reads GPRYCPSVEDKINRF.

Belongs to the MnmG family. As to quaternary structure, homodimer. Heterotetramer of two MnmE and two MnmG subunits. Requires FAD as cofactor.

The protein resides in the cytoplasm. Its function is as follows. NAD-binding protein involved in the addition of a carboxymethylaminomethyl (cmnm) group at the wobble position (U34) of certain tRNAs, forming tRNA-cmnm(5)s(2)U34. This chain is tRNA uridine 5-carboxymethylaminomethyl modification enzyme MnmG, found in Acidovorax ebreus (strain TPSY) (Diaphorobacter sp. (strain TPSY)).